A 185-amino-acid chain; its full sequence is Ribosome-recycling factor (185 aa).

Belongs to the RRF family.

The protein resides in the cytoplasm. Responsible for the release of ribosomes from messenger RNA at the termination of protein biosynthesis. May increase the efficiency of translation by recycling ribosomes from one round of translation to another. Its function is as follows. Plays a role in sporulation. The polypeptide is Ribosome-recycling factor (Bacillus subtilis (strain 168)).